Reading from the N-terminus, the 298-residue chain is Inosose dehydratase 2 (298 aa).

Belongs to the IolE/MocC family. Glutathione is required as a cofactor. Co(2+) serves as cofactor. It depends on Mn(2+) as a cofactor.

It carries out the reaction scyllo-inosose = 3D-3,5/4-trihydroxycyclohexane-1,2-dione + H2O. It functions in the pathway polyol metabolism; myo-inositol degradation into acetyl-CoA; acetyl-CoA from myo-inositol: step 2/7. Catalyzes the dehydration of inosose (2-keto-myo-inositol, 2KMI or 2,4,6/3,5-pentahydroxycyclohexanone) to 3D-(3,5/4)-trihydroxycyclohexane-1,2-dione (D-2,3-diketo-4-deoxy-epi-inositol). The sequence is that of Inosose dehydratase 2 from Bacillus cereus (strain ZK / E33L).